Reading from the N-terminus, the 174-residue chain is Large ribosomal subunit protein uL10 (174 aa).

The protein belongs to the universal ribosomal protein uL10 family. In terms of assembly, part of the ribosomal stalk of the 50S ribosomal subunit. The N-terminus interacts with L11 and the large rRNA to form the base of the stalk. The C-terminus forms an elongated spine to which L12 dimers bind in a sequential fashion forming a multimeric L10(L12)X complex.

Forms part of the ribosomal stalk, playing a central role in the interaction of the ribosome with GTP-bound translation factors. The protein is Large ribosomal subunit protein uL10 of Nitrosospira multiformis (strain ATCC 25196 / NCIMB 11849 / C 71).